The sequence spans 227 residues: Uracil-DNA glycosylase (227 aa).

The Proton acceptor role is filled by D65.

Belongs to the uracil-DNA glycosylase (UDG) superfamily. UNG family.

Its subcellular location is the cytoplasm. It carries out the reaction Hydrolyzes single-stranded DNA or mismatched double-stranded DNA and polynucleotides, releasing free uracil.. In terms of biological role, excises uracil residues from the DNA which can arise as a result of misincorporation of dUMP residues by DNA polymerase or due to deamination of cytosine. This Lactobacillus delbrueckii subsp. bulgaricus (strain ATCC BAA-365 / Lb-18) protein is Uracil-DNA glycosylase.